The chain runs to 253 residues: Probable transcriptional regulatory protein Tpet_0454 (253 aa).

This sequence belongs to the TACO1 family.

The protein localises to the cytoplasm. The protein is Probable transcriptional regulatory protein Tpet_0454 of Thermotoga petrophila (strain ATCC BAA-488 / DSM 13995 / JCM 10881 / RKU-1).